Reading from the N-terminus, the 319-residue chain is 4-diphosphocytidyl-2-C-methyl-D-erythritol kinase (319 aa).

K18 is an active-site residue. 103–113 (PIGAGLAGGST) provides a ligand contact to ATP. D145 is an active-site residue.

It belongs to the GHMP kinase family. IspE subfamily.

It carries out the reaction 4-CDP-2-C-methyl-D-erythritol + ATP = 4-CDP-2-C-methyl-D-erythritol 2-phosphate + ADP + H(+). The protein operates within isoprenoid biosynthesis; isopentenyl diphosphate biosynthesis via DXP pathway; isopentenyl diphosphate from 1-deoxy-D-xylulose 5-phosphate: step 3/6. Functionally, catalyzes the phosphorylation of the position 2 hydroxy group of 4-diphosphocytidyl-2C-methyl-D-erythritol. In Prochlorococcus marinus (strain NATL1A), this protein is 4-diphosphocytidyl-2-C-methyl-D-erythritol kinase.